The chain runs to 496 residues: Probable uroporphyrinogen-III C-methyltransferase (496 aa).

Belongs to the precorrin methyltransferase family.

The catalysed reaction is uroporphyrinogen III + 2 S-adenosyl-L-methionine = precorrin-2 + 2 S-adenosyl-L-homocysteine + H(+). Functionally, siroheme synthase involved in methionine biosynthesis. The polypeptide is Probable uroporphyrinogen-III C-methyltransferase (Schizosaccharomyces pombe (strain 972 / ATCC 24843) (Fission yeast)).